Here is a 181-residue protein sequence, read N- to C-terminus: Regulator of G-protein signaling 5 (181 aa).

Positions 64–180 constitute an RGS domain; that stretch reads SLDKLLQSNY…VRSEFYKELI (117 aa).

The protein resides in the cytoplasm. It localises to the membrane. Its function is as follows. Inhibits signal transduction by increasing the GTPase activity of G protein alpha subunits thereby driving them into their inactive GDP-bound form. Binds to G(i)-alpha and G(o)-alpha, but not to G(s)-alpha. The protein is Regulator of G-protein signaling 5 (Rgs5) of Rattus norvegicus (Rat).